A 364-amino-acid polypeptide reads, in one-letter code: Natterin-3 (364 aa).

Residues 1–18 form the signal peptide; that stretch reads MKLSVLVVTLLAVSWTSA. The propeptide occupies 19 to 42; that stretch reads QPETFSIQTKEANMNPEPANIRVA.

It belongs to the natterin family. Post-translationally, contains 4 disulfide bonds. Expressed by the venom gland.

It localises to the secreted. Its activity is regulated as follows. Inhibited by tissue-kallikrein inhibitor TKI and trasylol. Plasma kallikrein inhibitor PKSI527 and classical inhibitors of serine-, metallo-, thiol- or aspartate-peptidases evokes a minor inhibition of the peptide digestion. In terms of biological role, shows nociceptive, edema-inducing and kininogenase activity with release of kallidin from low molecular weight kininogen. The cleavage occurs at Met-Lys bonds. This Thalassophryne nattereri (Copper Joe toadfish) protein is Natterin-3.